The following is a 4114-amino-acid chain: Ferrichrome siderophore peptide synthetase (4114 aa).

4 consecutive Carrier domains span residues 797–874 (DPAT…QSSG), 1947–2021 (TDSE…IDKL), 3020–3093 (TQSE…MQSS), and 3574–3650 (QALS…SQTN). 4 positions are modified to O-(pantetheine 4'-phosphoryl)serine: S835, S1982, S3054, and S3611. The disordered stretch occupies residues 4040–4061 (LDYSHHSQHSTHDRTPPSTPHV). Positions 4041 to 4054 (DYSHHSQHSTHDRT) are enriched in basic and acidic residues.

The protein belongs to the ATP-dependent AMP-binding enzyme family. Pantetheine 4'-phosphate serves as cofactor.

The protein operates within siderophore biosynthesis; ferrichrome biosynthesis. Multidomain peptide synthetase involved in ferrichrome biosynthesis. The protein is Ferrichrome siderophore peptide synthetase (SID2) of Mycosarcoma maydis (Corn smut fungus).